We begin with the raw amino-acid sequence, 349 residues long: Alanine racemase (349 aa).

The active-site Proton acceptor; specific for D-alanine is the Lys-35. Lys-35 is modified (N6-(pyridoxal phosphate)lysine). A substrate-binding site is contributed by Arg-130. Tyr-244 functions as the Proton acceptor; specific for L-alanine in the catalytic mechanism. Met-292 lines the substrate pocket.

The protein belongs to the alanine racemase family. Pyridoxal 5'-phosphate serves as cofactor.

It carries out the reaction L-alanine = D-alanine. It participates in amino-acid biosynthesis; D-alanine biosynthesis; D-alanine from L-alanine: step 1/1. Functionally, catalyzes the interconversion of L-alanine and D-alanine. May also act on other amino acids. The polypeptide is Alanine racemase (alr) (Cereibacter sphaeroides (strain KD131 / KCTC 12085) (Rhodobacter sphaeroides)).